Here is a 247-residue protein sequence, read N- to C-terminus: Oocyte zinc finger protein XlCOF20 (247 aa).

C2H2-type zinc fingers lie at residues 6-28 (YDCR…QRVH), 34-56 (FPCT…QRVH), 62-84 (FICS…LRVH), 90-112 (FVCT…QRVH), 118-140 (FTCT…LRVH), 146-168 (FVCT…LRVH), 174-196 (FMCA…QRIC), and 225-247 (QSCA…MRVH).

This sequence belongs to the krueppel C2H2-type zinc-finger protein family.

Its subcellular location is the nucleus. Functionally, may be involved in transcriptional regulation. The chain is Oocyte zinc finger protein XlCOF20 from Xenopus laevis (African clawed frog).